Reading from the N-terminus, the 184-residue chain is ATP synthase subunit delta (184 aa).

This sequence belongs to the ATPase delta chain family. F-type ATPases have 2 components, F(1) - the catalytic core - and F(0) - the membrane proton channel. F(1) has five subunits: alpha(3), beta(3), gamma(1), delta(1), epsilon(1). CF(0) has four main subunits: a(1), b(1), b'(1) and c(10-14). The alpha and beta chains form an alternating ring which encloses part of the gamma chain. F(1) is attached to F(0) by a central stalk formed by the gamma and epsilon chains, while a peripheral stalk is formed by the delta, b and b' chains.

The protein localises to the cellular thylakoid membrane. Functionally, f(1)F(0) ATP synthase produces ATP from ADP in the presence of a proton or sodium gradient. F-type ATPases consist of two structural domains, F(1) containing the extramembraneous catalytic core and F(0) containing the membrane proton channel, linked together by a central stalk and a peripheral stalk. During catalysis, ATP synthesis in the catalytic domain of F(1) is coupled via a rotary mechanism of the central stalk subunits to proton translocation. In terms of biological role, this protein is part of the stalk that links CF(0) to CF(1). It either transmits conformational changes from CF(0) to CF(1) or is implicated in proton conduction. The protein is ATP synthase subunit delta of Nostoc punctiforme (strain ATCC 29133 / PCC 73102).